Consider the following 121-residue polypeptide: Non-structural protein 8 (121 aa).

A signal peptide spans 1–15 (MKLLIVFGLLTSVYC). One can recognise an SARS ORF8 Ig-like domain in the interval 19–121 (ECSIQECCEN…HDVRVVLDFI (103 aa)). 3 disulfides stabilise this stretch: C25–C90, C37–C102, and C61–C83.

The polypeptide is Non-structural protein 8 (Rhinolophus macrotis (Big-eared horseshoe bat)).